The sequence spans 390 residues: Branched-chain-amino-acid aminotransferase (390 aa).

Lys-225 is modified (N6-(pyridoxal phosphate)lysine).

It belongs to the class-IV pyridoxal-phosphate-dependent aminotransferase family. In terms of assembly, homodimer. The cofactor is pyridoxal 5'-phosphate.

The catalysed reaction is L-leucine + 2-oxoglutarate = 4-methyl-2-oxopentanoate + L-glutamate. It carries out the reaction L-isoleucine + 2-oxoglutarate = (S)-3-methyl-2-oxopentanoate + L-glutamate. The enzyme catalyses L-valine + 2-oxoglutarate = 3-methyl-2-oxobutanoate + L-glutamate. Functionally, catalyzes the first reaction in the catabolism of the essential branched chain amino acids leucine, isoleucine, and valine. The sequence is that of Branched-chain-amino-acid aminotransferase from Monosiga brevicollis (Choanoflagellate).